The sequence spans 714 residues: Phosphate acetyltransferase (714 aa).

Positions 391-714 are phosphate acetyltransferase; sequence AFRYQLTELA…LTAIQSAQQQ (324 aa).

It in the N-terminal section; belongs to the CobB/CobQ family. The protein in the C-terminal section; belongs to the phosphate acetyltransferase and butyryltransferase family. As to quaternary structure, homohexamer.

The protein localises to the cytoplasm. It catalyses the reaction acetyl-CoA + phosphate = acetyl phosphate + CoA. Its pathway is metabolic intermediate biosynthesis; acetyl-CoA biosynthesis; acetyl-CoA from acetate: step 2/2. Inhibited by NADH and ATP. Pyruvate and PEP act as activators of the acetyl phosphate forming reaction while inhibiting the formation of acetyl-CoA. In terms of biological role, involved in acetate metabolism. Catalyzes the reversible interconversion of acetyl-CoA and acetyl phosphate. The direction of the overall reaction changes depending on growth conditions. On minimal medium acetyl-CoA is generated. In rich medium acetyl-CoA is converted to acetate and allowing the cell to dump the excess of acetylation potential in exchange for energy in the form of ATP. The main pathway for acetate production during exponential phase. This is Phosphate acetyltransferase (pta) from Escherichia coli (strain K12).